The chain runs to 130 residues: MAQAQYAGTGRRKNAVARVRLVPGTGKITVNKKDVEEYIPHADLRLVINQPFAVTSTEGSYDVFVNVVGGGYAGQSGAIRHGIARALLQVDPDFRDSLKRAGLLTRDARMVERKKPGLKKARKASQFSKR.

The protein belongs to the universal ribosomal protein uS9 family.

This is Small ribosomal subunit protein uS9 from Streptococcus equi subsp. equi (strain 4047).